The chain runs to 95 residues: UPF0298 protein LVIS_1401 (95 aa).

It belongs to the UPF0298 family.

The protein localises to the cytoplasm. The protein is UPF0298 protein LVIS_1401 of Levilactobacillus brevis (strain ATCC 367 / BCRC 12310 / CIP 105137 / JCM 1170 / LMG 11437 / NCIMB 947 / NCTC 947) (Lactobacillus brevis).